A 408-amino-acid chain; its full sequence is CinA-like protein (408 aa).

It belongs to the CinA family.

The polypeptide is CinA-like protein (Anaeromyxobacter dehalogenans (strain 2CP-1 / ATCC BAA-258)).